Reading from the N-terminus, the 209-residue chain is Uracil phosphoribosyltransferase (209 aa).

Residues R79, R104, and 131 to 139 (DPMLATGGS) each bind 5-phospho-alpha-D-ribose 1-diphosphate. Residues I194 and 199-201 (GDA) each bind uracil. D200 contributes to the 5-phospho-alpha-D-ribose 1-diphosphate binding site.

Belongs to the UPRTase family. It depends on Mg(2+) as a cofactor.

It catalyses the reaction UMP + diphosphate = 5-phospho-alpha-D-ribose 1-diphosphate + uracil. It functions in the pathway pyrimidine metabolism; UMP biosynthesis via salvage pathway; UMP from uracil: step 1/1. Its activity is regulated as follows. Allosterically activated by GTP. In terms of biological role, catalyzes the conversion of uracil and 5-phospho-alpha-D-ribose 1-diphosphate (PRPP) to UMP and diphosphate. The protein is Uracil phosphoribosyltransferase of Latilactobacillus sakei (Lactobacillus sakei).